The chain runs to 854 residues: MLITERKYFWSGRIAQSRSEANLVDMEAGKLSKSCNITECQDPDLLHNWPDAFTLHGNNASKVTNPFWNQLSASNPFLDDITQLRNNRKRNNISILKEDPLLFFREIENGNSFDSSGDELDVHQLLRQSSSRKSGRSKSVSELLDILDDTAHAHQSIHNSDQILLHDLEWLKNDREAYKMAWLSQRQLARSCLDLNTISQSPGWAQTQLAEVTKACKVNHQGGSVQLPESDITVHVPQGHVAVGEFQEVSLRAFLDPPHMLNHDLSCTVSPLLEIMLGNLNTMEALLLEMKIGAEVGKDPFSQVMTEMVCLHSLGKEGPFKILSNCYIYKDTIQVKLIDLSQVMYLVVAAQAKALQSPAATIWDYIHKTTSIGIYGPKYIHPSFTVVLTVCGHNYMPGQLTISDIKKCGKNISPVVFQLWGKQSFLLDKPQDLSISIFSCDPDFEVKTEGERKEIKQKQLEAGEVVHQQFLFSLVEHREMHLFDFCVQVELPNGEPVAQFCITTPDPTPNLKRLSNLPGYLQKKEEIKSAPLSPKILVKYPTFQDKTLNFTNYGVTLKAVLRQSKIDYFLEYFKGDTIALLGEGKVKVIGQSKVKEWYVGVLRGKIGLVHCKNVKVISKEQVMFMSDSVFTTRNLLEQIVLPLKKLTYIYSVVLTLVSEKVYDWKVLADVLGYSHLSVEDFDQIHADKESEKVSYVIKKLKEDCHTKRNTRKFLYELIVALLKMDCQALVARLIREAAVLTSAVKLGKGWRELAEKLVRLTKQQMEAYEIPHRGNTGDVAVEMMWKPAYDFLYTWSAHYGNNYRDVLQDLQSALDRMKNPVTKHWRELTGVLILVNSLEVLRVTAFSTSEEVWK.

A Phosphoserine modification is found at serine 19. The region spanning 212–349 (VTKACKVNHQ…LSQVMYLVVA (138 aa)) is the ZU5 domain. Residues 549–619 (NFTNYGVTLK…HCKNVKVISK (71 aa)) form the SH3 domain.

In terms of assembly, interacts with FASLG.

It localises to the cytoplasm. Its subcellular location is the nucleus. Its function is as follows. Acts as a transcription activator for MET and as a key regulator of HGF-MET signaling. This is Metastasis-associated in colon cancer protein 1 (MACC1) from Pongo abelii (Sumatran orangutan).